A 107-amino-acid chain; its full sequence is Large ribosomal subunit protein P2-A (107 aa).

A disordered region spans residues 85-107 (GAAAPAAAAEEEEDDDMGFGLFD).

This sequence belongs to the eukaryotic ribosomal protein P1/P2 family. In terms of assembly, P1 and P2 exist as dimers at the large ribosomal subunit. In terms of processing, phosphorylated.

In terms of biological role, plays an important role in the elongation step of protein synthesis. In Trypanosoma cruzi, this protein is Large ribosomal subunit protein P2-A.